We begin with the raw amino-acid sequence, 106 residues long: Small ribosomal subunit protein uS10 (106 aa).

Belongs to the universal ribosomal protein uS10 family. Part of the 30S ribosomal subunit.

Involved in the binding of tRNA to the ribosomes. This is Small ribosomal subunit protein uS10 from Prochlorococcus marinus (strain MIT 9301).